Reading from the N-terminus, the 396-residue chain is Putative T-box protein 39 (396 aa).

A DNA-binding region (T-box) is located at residues 11-192 (MAEEDRWKQW…KNSTYGNRLD (182 aa)). The tract at residues 185 to 215 (STYGNRLDGGNKRKNTDSSEERTSKRSKNET) is disordered. Positions 193–215 (GGNKRKNTDSSEERTSKRSKNET) are enriched in basic and acidic residues.

Its subcellular location is the nucleus. The protein is Putative T-box protein 39 (tbx-39) of Caenorhabditis elegans.